A 141-amino-acid chain; its full sequence is MAIERTLSIIKPDAVAKNVIGQIYARFEAAGLKIVAAKMVHLSRGEAEQFYAVHKERPFFKDLVDFMVSGPVMIQALEGENAIAKNRDLMGATDPKKAEKGTIRADFADSIDANAVHGSDAAETAAVEVAFFFPGMNVYSR.

6 residues coordinate ATP: Lys-11, Phe-59, Arg-87, Thr-93, Arg-104, and Asn-114. The Pros-phosphohistidine intermediate role is filled by His-117.

The protein belongs to the NDK family. In terms of assembly, homotetramer. Mg(2+) is required as a cofactor.

It is found in the cytoplasm. The enzyme catalyses a 2'-deoxyribonucleoside 5'-diphosphate + ATP = a 2'-deoxyribonucleoside 5'-triphosphate + ADP. It catalyses the reaction a ribonucleoside 5'-diphosphate + ATP = a ribonucleoside 5'-triphosphate + ADP. Its function is as follows. Major role in the synthesis of nucleoside triphosphates other than ATP. The ATP gamma phosphate is transferred to the NDP beta phosphate via a ping-pong mechanism, using a phosphorylated active-site intermediate. In Cupriavidus taiwanensis (strain DSM 17343 / BCRC 17206 / CCUG 44338 / CIP 107171 / LMG 19424 / R1) (Ralstonia taiwanensis (strain LMG 19424)), this protein is Nucleoside diphosphate kinase.